We begin with the raw amino-acid sequence, 183 residues long: Photosystem I assembly protein Ycf4 (183 aa).

2 helical membrane-spanning segments follow: residues 23 to 43 and 64 to 84; these read WASV…SSYF and VMSF…LTII.

It belongs to the Ycf4 family.

It localises to the plastid. The protein localises to the chloroplast thylakoid membrane. Functionally, seems to be required for the assembly of the photosystem I complex. In Stigeoclonium helveticum (Green alga), this protein is Photosystem I assembly protein Ycf4.